A 746-amino-acid chain; its full sequence is Chitin biosynthesis protein CHS6 (746 aa).

Residues 1–25 (MNLFWPSETKKQNEIPGGDYTPGNS) form a disordered region. The interval 734–746 (LAWIADLDHTVQP) is CHS5-binding.

Belongs to the CHAPS family. Component of the CHS5/6 complex composed of the 4 CHAPS proteins BCH1, BCH2, BUD7, and CHS6 as well as at least CHS5 and GTP-bound ARF1. The complex interacts with the cargo protein CHS3.

It localises to the golgi apparatus. The protein resides in the trans-Golgi network membrane. Functionally, member of the CHS5-ARF1P-binding proteins (CHAPS) which mediates export of specific cargo proteins, including chitin synthase CHS3. This chain is Chitin biosynthesis protein CHS6 (CHS6), found in Saccharomyces cerevisiae (strain ATCC 204508 / S288c) (Baker's yeast).